The chain runs to 115 residues: uncharacterized protein (115 aa).

Residues 1–86 (RRPARSGGDG…LSSQLVRPSR (86 aa)) form a disordered region.

This is an uncharacterized protein from Homo sapiens (Human).